The chain runs to 900 residues: Translation initiation factor IF-2 (900 aa).

Residues 80–95 (LEEQSRKTVEKEDQLR) show a composition bias toward basic and acidic residues. Disordered stretches follow at residues 80 to 106 (LEEQSRKTVEKEDQLRDTLQPSPVPGR), 149 to 169 (AVEAEPEVAPPSLEAEEDSPV), and 221 to 268 (DEFD…VDEK). Over residues 253-262 (GKKKGKKKKK) the composition is skewed to basic residues. One can recognise a tr-type G domain in the interval 397 to 567 (TRPPVVTIMG…LTEAEVRELK (171 aa)). The tract at residues 406-413 (GHVDHGKT) is G1. Residue 406 to 413 (GHVDHGKT) coordinates GTP. The G2 stretch occupies residues 431 to 435 (GITQH). The segment at 453 to 456 (DTPG) is G3. GTP-binding positions include 453–457 (DTPGH) and 507–510 (NKID). The segment at 507 to 510 (NKID) is G4. Positions 543-545 (SAK) are G5.

It belongs to the TRAFAC class translation factor GTPase superfamily. Classic translation factor GTPase family. IF-2 subfamily.

It is found in the cytoplasm. One of the essential components for the initiation of protein synthesis. Protects formylmethionyl-tRNA from spontaneous hydrolysis and promotes its binding to the 30S ribosomal subunits. Also involved in the hydrolysis of GTP during the formation of the 70S ribosomal complex. This chain is Translation initiation factor IF-2, found in Chlorobium phaeovibrioides (strain DSM 265 / 1930) (Prosthecochloris vibrioformis (strain DSM 265)).